Reading from the N-terminus, the 697-residue chain is Polyribonucleotide nucleotidyltransferase (697 aa).

The Mg(2+) site is built by aspartate 488 and aspartate 494. A KH domain is found at 555–614; sequence PTLLTLKINPDKIRDVIGKGGATIRALTEETGCTIDIEDDGSVKIYGETREKADEAVRRV. The S1 motif domain maps to 624 to 692; that stretch reads GAIYEGKVTR…QRGRIKLSMK (69 aa).

The protein belongs to the polyribonucleotide nucleotidyltransferase family. In terms of assembly, component of the RNA degradosome, which is a multiprotein complex involved in RNA processing and mRNA degradation. Mg(2+) is required as a cofactor.

Its subcellular location is the cytoplasm. It catalyses the reaction RNA(n+1) + phosphate = RNA(n) + a ribonucleoside 5'-diphosphate. Involved in mRNA degradation. Catalyzes the phosphorolysis of single-stranded polyribonucleotides processively in the 3'- to 5'-direction. This Alcanivorax borkumensis (strain ATCC 700651 / DSM 11573 / NCIMB 13689 / SK2) protein is Polyribonucleotide nucleotidyltransferase.